Here is a 401-residue protein sequence, read N- to C-terminus: Imidazolonepropionase (401 aa).

Fe(3+) is bound by residues His-66 and His-68. Residues His-66 and His-68 each contribute to the Zn(2+) site. Arg-75, Tyr-138, and His-171 together coordinate 4-imidazolone-5-propanoate. Residue Tyr-138 coordinates N-formimidoyl-L-glutamate. His-236 is a Fe(3+) binding site. Residue His-236 participates in Zn(2+) binding. Gln-239 lines the 4-imidazolone-5-propanoate pocket. A Fe(3+)-binding site is contributed by Asp-311. Asp-311 is a binding site for Zn(2+). Positions 313 and 315 each coordinate N-formimidoyl-L-glutamate. 4-imidazolone-5-propanoate is bound at residue Thr-316.

Belongs to the metallo-dependent hydrolases superfamily. HutI family. It depends on Zn(2+) as a cofactor. The cofactor is Fe(3+).

It is found in the cytoplasm. It carries out the reaction 4-imidazolone-5-propanoate + H2O = N-formimidoyl-L-glutamate. The protein operates within amino-acid degradation; L-histidine degradation into L-glutamate; N-formimidoyl-L-glutamate from L-histidine: step 3/3. Its function is as follows. Catalyzes the hydrolytic cleavage of the carbon-nitrogen bond in imidazolone-5-propanoate to yield N-formimidoyl-L-glutamate. It is the third step in the universal histidine degradation pathway. The sequence is that of Imidazolonepropionase from Pseudomonas fluorescens (strain Pf0-1).